A 428-amino-acid polypeptide reads, in one-letter code: Protein clpf-1 (428 aa).

Glu16 and Arg56 together coordinate ATP. The interval 99-118 (KKREEQAVSNSSKPKGPRLL) is disordered. An ATP-binding site is contributed by 124–129 (DVGKTT).

This sequence belongs to the Clp1 family. Clp1 subfamily.

The protein resides in the nucleus. Its function is as follows. Required for endonucleolytic cleavage during polyadenylation-dependent pre-mRNA 3'-end formation. The polypeptide is Protein clpf-1 (Caenorhabditis briggsae).